The sequence spans 473 residues: Inactive FRIGIDA-like protein 2 (473 aa).

Coiled coils occupy residues 3-35 and 306-361; these read AAESIAASINQIDEKKQKLKKAFDDLQAHRSLL and SLKV…RATK. The tract at residues 356–384 is disordered; it reads RKRATKFNSPANPQQPQEQKVDNKRPRVA. A compositionally biased stretch (polar residues) spans 361–373; sequence KFNSPANPQQPQE.

Belongs to the Frigida family. As to expression, expressed at low levels throughout the plant, with slightly higher expression in developing seeds and the highest expression in pollen.

In terms of biological role, inactive FRIGIDA-like 2 protein. The chain is Inactive FRIGIDA-like protein 2 (FRL2) from Arabidopsis thaliana (Mouse-ear cress).